The primary structure comprises 566 residues: CTP synthase (566 aa).

Positions 1-265 (MTKYVFVTGG…DEIVCHKLNL (265 aa)) are amidoligase domain. Ser13 is a binding site for CTP. Ser13 provides a ligand contact to UTP. Residues 14–19 (SLGKGI) and Asp71 each bind ATP. Mg(2+)-binding residues include Asp71 and Glu139. CTP is bound by residues 146–148 (DIE), 186–191 (KTKPTQ), and Lys222. UTP-binding positions include 186-191 (KTKPTQ) and Lys222. Positions 290-543 (EIALVGKYVD…IEAAAVFADK (254 aa)) constitute a Glutamine amidotransferase type-1 domain. L-glutamine is bound at residue Gly351. Cys378 serves as the catalytic Nucleophile; for glutamine hydrolysis. Residues 379–382 (LGMQ), Glu402, and Arg469 contribute to the L-glutamine site. Residues His516 and Glu518 contribute to the active site. The segment at 545–566 (PSSEGAISADKPERTTTGAYIQ) is disordered.

It belongs to the CTP synthase family. Homotetramer.

The catalysed reaction is UTP + L-glutamine + ATP + H2O = CTP + L-glutamate + ADP + phosphate + 2 H(+). The enzyme catalyses L-glutamine + H2O = L-glutamate + NH4(+). It catalyses the reaction UTP + NH4(+) + ATP = CTP + ADP + phosphate + 2 H(+). It functions in the pathway pyrimidine metabolism; CTP biosynthesis via de novo pathway; CTP from UDP: step 2/2. Its activity is regulated as follows. Allosterically activated by GTP, when glutamine is the substrate; GTP has no effect on the reaction when ammonia is the substrate. The allosteric effector GTP functions by stabilizing the protein conformation that binds the tetrahedral intermediate(s) formed during glutamine hydrolysis. Inhibited by the product CTP, via allosteric rather than competitive inhibition. In terms of biological role, catalyzes the ATP-dependent amination of UTP to CTP with either L-glutamine or ammonia as the source of nitrogen. Regulates intracellular CTP levels through interactions with the four ribonucleotide triphosphates. The polypeptide is CTP synthase (Nitrosospira multiformis (strain ATCC 25196 / NCIMB 11849 / C 71)).